Here is a 72-residue protein sequence, read N- to C-terminus: uncharacterized protein (72 aa).

This is an uncharacterized protein from Mycobacterium tuberculosis (strain ATCC 25618 / H37Rv).